Consider the following 430-residue polypeptide: MLKEGSSLDLSASSSSGTLRSDNSFGNSPLDRITSLLILIYKSIRACFKWIYSKSFGIICILFVILDVLTTVFFKRFIDHTKNYVMFTIQVIIFTFWIIVCCIAILCFLFNREYMKRHFNVRPLVFLGFLDMLSTGLSANGSAHTSGLMLVLLGQISVPLTMVSCKLILSKKYHHYQYISSAIILTFAVLKPILNRTDTTDNRFYNNMLYLLASVPDSIASALREKQYTSKFFHVVKYQFFGFLFHFFYNILYTLLFTLPFNSVKGYFDSLYKLCVNGYKCIFFGVNTITENCGPTLIPTCDNCLEAFKIYCLYILFSSAIRVAYVFIMLDGSVTFTLLLGTVKVPLTSIAFSLRFIAGDSTTSFNLLDVVCFLGIVAGLLLYALGSKKIQEETDLLESPLIDDAESEHELLSTGTEKLMRSEICHDLFT.

The segment at 1-22 (MLKEGSSLDLSASSSSGTLRSD) is disordered. Residues 1–53 (MLKEGSSLDLSASSSSGTLRSDNSFGNSPLDRITSLLILIYKSIRACFKWIYS) lie on the Cytoplasmic side of the membrane. The span at 7 to 21 (SLDLSASSSSGTLRS) shows a compositional bias: low complexity. The chain crosses the membrane as a helical span at residues 54–74 (KSFGIICILFVILDVLTTVFF). The Vacuolar segment spans residues 75-88 (KRFIDHTKNYVMFT). Residues 89 to 109 (IQVIIFTFWIIVCCIAILCFL) traverse the membrane as a helical segment. Topologically, residues 110–122 (FNREYMKRHFNVR) are cytoplasmic. A helical transmembrane segment spans residues 123-143 (PLVFLGFLDMLSTGLSANGSA). Residues 144–147 (HTSG) lie on the Vacuolar side of the membrane. The chain crosses the membrane as a helical span at residues 148–168 (LMLVLLGQISVPLTMVSCKLI). Over 169-173 (LSKKY) the chain is Cytoplasmic. Residues 174-194 (HHYQYISSAIILTFAVLKPIL) form a helical membrane-spanning segment. N-linked (GlcNAc...) asparagine glycosylation occurs at Asn195. Topologically, residues 195–206 (NRTDTTDNRFYN) are vacuolar. The helical transmembrane segment at 207 to 223 (NMLYLLASVPDSIASAL) threads the bilayer. The Cytoplasmic portion of the chain corresponds to 224–239 (REKQYTSKFFHVVKYQ). Residues 240–260 (FFGFLFHFFYNILYTLLFTLP) form a helical membrane-spanning segment. At 261–306 (FNSVKGYFDSLYKLCVNGYKCIFFGVNTITENCGPTLIPTCDNCLE) the chain is on the vacuolar side. Intrachain disulfides connect Cys281–Cys304 and Cys293–Cys301. Residues 307–329 (AFKIYCLYILFSSAIRVAYVFIM) traverse the membrane as a helical segment. At 330 to 335 (LDGSVT) the chain is on the cytoplasmic side. The helical transmembrane segment at 336 to 358 (FTLLLGTVKVPLTSIAFSLRFIA) threads the bilayer. Over 359–364 (GDSTTS) the chain is Vacuolar. A helical membrane pass occupies residues 365–385 (FNLLDVVCFLGIVAGLLLYAL). The Cytoplasmic portion of the chain corresponds to 386-430 (GSKKIQEETDLLESPLIDDAESEHELLSTGTEKLMRSEICHDLFT).

It belongs to the CRT-like transporter family.

Its subcellular location is the vacuole membrane. Its function is as follows. Nutrient transporter. Involved in maintaining the osmotic homeostasis of the digestive vacuole. In Theileria annulata, this protein is Putative chloroquine resistance transporter.